A 183-amino-acid chain; its full sequence is ATP synthase subunit b, chloroplastic (183 aa).

A helical membrane pass occupies residues 27-49 (LATNPINLSVVLGVLIFFGKGVL).

This sequence belongs to the ATPase B chain family. As to quaternary structure, F-type ATPases have 2 components, F(1) - the catalytic core - and F(0) - the membrane proton channel. F(1) has five subunits: alpha(3), beta(3), gamma(1), delta(1), epsilon(1). F(0) has four main subunits: a(1), b(1), b'(1) and c(10-14). The alpha and beta chains form an alternating ring which encloses part of the gamma chain. F(1) is attached to F(0) by a central stalk formed by the gamma and epsilon chains, while a peripheral stalk is formed by the delta, b and b' chains.

The protein resides in the plastid. It is found in the chloroplast thylakoid membrane. F(1)F(0) ATP synthase produces ATP from ADP in the presence of a proton or sodium gradient. F-type ATPases consist of two structural domains, F(1) containing the extramembraneous catalytic core and F(0) containing the membrane proton channel, linked together by a central stalk and a peripheral stalk. During catalysis, ATP synthesis in the catalytic domain of F(1) is coupled via a rotary mechanism of the central stalk subunits to proton translocation. Its function is as follows. Component of the F(0) channel, it forms part of the peripheral stalk, linking F(1) to F(0). The protein is ATP synthase subunit b, chloroplastic of Ranunculus macranthus (Large buttercup).